Consider the following 198-residue polypeptide: Recombination protein RecR (198 aa).

The segment at 58–73 (CKVCQTLTDKEICPIC) adopts a C4-type zinc-finger fold. One can recognise a Toprim domain in the interval 81-175 (KVIMVVENTR…KVSRIASGVP (95 aa)).

The protein belongs to the RecR family.

May play a role in DNA repair. It seems to be involved in an RecBC-independent recombinational process of DNA repair. It may act with RecF and RecO. The protein is Recombination protein RecR of Lachnoclostridium phytofermentans (strain ATCC 700394 / DSM 18823 / ISDg) (Clostridium phytofermentans).